The chain runs to 453 residues: Trigger factor (453 aa).

Residues G171–I256 form the PPIase FKBP-type domain.

This sequence belongs to the FKBP-type PPIase family. Tig subfamily.

It is found in the cytoplasm. It catalyses the reaction [protein]-peptidylproline (omega=180) = [protein]-peptidylproline (omega=0). Functionally, involved in protein export. Acts as a chaperone by maintaining the newly synthesized protein in an open conformation. Functions as a peptidyl-prolyl cis-trans isomerase. This chain is Trigger factor, found in Bradyrhizobium diazoefficiens (strain JCM 10833 / BCRC 13528 / IAM 13628 / NBRC 14792 / USDA 110).